Reading from the N-terminus, the 511-residue chain is Glucans biosynthesis protein G (511 aa).

A signal peptide spans 1-22; it reads MMKMRWLSAAVMLTLYTSSSWA.

The protein belongs to the OpgD/OpgG family.

The protein localises to the periplasm. It participates in glycan metabolism; osmoregulated periplasmic glucan (OPG) biosynthesis. Its function is as follows. Involved in the biosynthesis of osmoregulated periplasmic glucans (OPGs). This Shigella boydii serotype 4 (strain Sb227) protein is Glucans biosynthesis protein G.